A 123-amino-acid polypeptide reads, in one-letter code: WAP four-disulfide core domain protein 5 (123 aa).

Residues 1-24 (MRFGRLLLLAVLLAGVSQLPAVSG) form the signal peptide. WAP domains follow at residues 27-74 (KGEK…IPRV) and 75-121 (SVKL…RDPV). Intrachain disulfides connect Cys-34–Cys-62, Cys-41–Cys-66, Cys-49–Cys-61, Cys-55–Cys-70, Cys-81–Cys-109, Cys-88–Cys-113, Cys-96–Cys-108, and Cys-102–Cys-117.

The protein resides in the secreted. Its function is as follows. Putative acid-stable proteinase inhibitor. This chain is WAP four-disulfide core domain protein 5 (WFDC5), found in Otolemur garnettii (Small-eared galago).